Consider the following 685-residue polypeptide: Translation initiation factor IF-2 (685 aa).

The segment at 60–79 (ISLAKTREPSKEKTEAKKPP) is disordered. A compositionally biased stretch (basic and acidic residues) spans 64 to 79 (KTREPSKEKTEAKKPP). One can recognise a tr-type G domain in the interval 175–352 (NRPPVVTVMG…DIRCIPDSPV (178 aa)). The tract at residues 184–191 (GHVDHGKT) is G1. Residue 184–191 (GHVDHGKT) participates in GTP binding. The G2 stretch occupies residues 209 to 213 (GITQS). The interval 230 to 233 (DTPG) is G3. GTP contacts are provided by residues 230–234 (DTPGH) and 284–287 (NKID). A G4 region spans residues 284 to 287 (NKID). Positions 321-323 (SAR) are G5.

Belongs to the TRAFAC class translation factor GTPase superfamily. Classic translation factor GTPase family. IF-2 subfamily.

Its subcellular location is the cytoplasm. Functionally, one of the essential components for the initiation of protein synthesis. Protects formylmethionyl-tRNA from spontaneous hydrolysis and promotes its binding to the 30S ribosomal subunits. Also involved in the hydrolysis of GTP during the formation of the 70S ribosomal complex. The polypeptide is Translation initiation factor IF-2 (Fervidobacterium nodosum (strain ATCC 35602 / DSM 5306 / Rt17-B1)).